The following is a 396-amino-acid chain: Tryptophan synthase beta chain (396 aa).

The residue at position 86 (K86) is an N6-(pyridoxal phosphate)lysine.

The protein belongs to the TrpB family. Tetramer of two alpha and two beta chains. It depends on pyridoxal 5'-phosphate as a cofactor.

The catalysed reaction is (1S,2R)-1-C-(indol-3-yl)glycerol 3-phosphate + L-serine = D-glyceraldehyde 3-phosphate + L-tryptophan + H2O. The protein operates within amino-acid biosynthesis; L-tryptophan biosynthesis; L-tryptophan from chorismate: step 5/5. Functionally, the beta subunit is responsible for the synthesis of L-tryptophan from indole and L-serine. This Photobacterium profundum (strain SS9) protein is Tryptophan synthase beta chain.